The sequence spans 405 residues: MENIMTLPKIKQVRAWFTGGATAEKGAGGGDYHDQGANHWIDDHIATPMSKYREYEQSRQSFGINVLGTLIVEVEAENGQTGFAVSTAGEMGCFIVEKHLNRFIEGKCVSDIKLIHDQMLNATLYYSGSGGLVMNTISCVDLALWDLFGKVVGLPVYKLLGGAVRDEIQFYATDARPDLAKEMGFIGGKMPTHWGPHDGDAGIHKDAAMVADMREKCGEDFWLMLDCWMSQDVNYATKLAHACAPYNLKWIEECLPPQQYEGYRELKRNAPAGMMVTSGEHHGTLQSFRTLSETGIDIMQPDVGWCGGLTTLVEIAAIAKSRGQLVVPHGSSVYSHHAVITFTNTPFSEFLMTSPDCSTMRPQFDPILLNEPVPVNGRIHKSVLDKPGFGVELNRDCNLKRPYSH.

Substrate is bound by residues His33 and Arg59. Residues Asp226, Glu252, and Glu280 each contribute to the Mg(2+) site. The Proton acceptor role is filled by His329. Glu349 serves as a coordination point for substrate.

This sequence belongs to the mandelate racemase/muconate lactonizing enzyme family. RhamD subfamily. In terms of assembly, homooctamer; tetramer of dimers. It depends on Mg(2+) as a cofactor.

It catalyses the reaction L-rhamnonate = 2-dehydro-3-deoxy-L-rhamnonate + H2O. Catalyzes the dehydration of L-rhamnonate to 2-keto-3-deoxy-L-rhamnonate (KDR). The sequence is that of L-rhamnonate dehydratase from Escherichia coli O127:H6 (strain E2348/69 / EPEC).